The primary structure comprises 366 residues: uncharacterized protein (366 aa).

The 226-residue stretch at 63–288 (ARVAMVGFPS…LLEKMWEYLA (226 aa)) folds into the OBG-type G domain. GTP-binding positions include 69-76 (GFPSVGKS), 115-119 (DLPGI), and 246-249 (NKVD). In terms of domain architecture, TGS spans 288 to 365 (ALVRVYTKKP…DHEDVIQIVK (78 aa)).

Belongs to the TRAFAC class OBG-HflX-like GTPase superfamily. OBG GTPase family.

This is an uncharacterized protein from Caenorhabditis elegans.